The primary structure comprises 127 residues: Fluoride-specific ion channel FluC (127 aa).

4 consecutive transmembrane segments (helical) span residues 4–24, 35–55, 71–91, and 103–123; these read LLLA…LLSM, LGTL…FAWF, TGFC…VFLL, and VFVN…LFSA. The Na(+) site is built by glycine 75 and threonine 78.

The protein belongs to the fluoride channel Fluc/FEX (TC 1.A.43) family.

The protein resides in the cell inner membrane. The catalysed reaction is fluoride(in) = fluoride(out). With respect to regulation, na(+) is not transported, but it plays an essential structural role and its presence is essential for fluoride channel function. Functionally, fluoride-specific ion channel. Important for reducing fluoride concentration in the cell, thus reducing its toxicity. This is Fluoride-specific ion channel FluC from Escherichia coli (strain ATCC 8739 / DSM 1576 / NBRC 3972 / NCIMB 8545 / WDCM 00012 / Crooks).